The chain runs to 363 residues: MAGNSIGQLFRVTTCGESHGVGLMAIVDGVPPGLALTEEDLQKDLDRRKPGTSKFATQRKEPDQVEIISGVFEGKTTGTPIGLLIRNTDQKSKDYGNIAQTFRPGHADYTYTQKYGFRDYRGGGRSSARETAMRVAAGAIAKKYLAEKFGVLIRGHVTQIGNEVAEKLDWNEVPNNPFFCGDVDAVPRFEALVTSLREQGTSCGAKLEILAEKVPVGWGEPVFDRLDADIAHAMMSINAVKGVEIGDGFAVAGQFGHETRDELTSHGFLANHAGGILGGISSGQTIRVAIALKPTASITTPGKTINLNREDTDVLTKGRHDPCVGVRATPIAEAMLAIVLMDHFLRHRAQNADVVPPFAPIEP.

Position 48 (arginine 48) interacts with NADP(+). FMN is bound by residues 125 to 127 (RSS), 238 to 239 (NA), glycine 278, 293 to 297 (KPTAS), and arginine 319.

The protein belongs to the chorismate synthase family. In terms of assembly, homotetramer. It depends on FMNH2 as a cofactor.

The catalysed reaction is 5-O-(1-carboxyvinyl)-3-phosphoshikimate = chorismate + phosphate. The protein operates within metabolic intermediate biosynthesis; chorismate biosynthesis; chorismate from D-erythrose 4-phosphate and phosphoenolpyruvate: step 7/7. Functionally, catalyzes the anti-1,4-elimination of the C-3 phosphate and the C-6 proR hydrogen from 5-enolpyruvylshikimate-3-phosphate (EPSP) to yield chorismate, which is the branch point compound that serves as the starting substrate for the three terminal pathways of aromatic amino acid biosynthesis. This reaction introduces a second double bond into the aromatic ring system. The chain is Chorismate synthase from Acinetobacter baumannii (strain AB0057).